Reading from the N-terminus, the 1551-residue chain is Transient receptor potential cation channel subfamily M member-like 2 (1551 aa).

The Cytoplasmic portion of the chain corresponds to 1-714 (MGKDSFTPLY…WMGTMAMNTR (714 aa)). The stretch at 715 to 730 (WWKVLVCLYLPVLIFP) is an intramembrane region. Residues 731 to 837 (IIYFVPDEQH…DRIMHFYSAP (107 aa)) lie on the Cytoplasmic side of the membrane. The interval 744-767 (AAEREHQKSLNQKSSKVKSHKEKN) is disordered. A helical transmembrane segment spans residues 838–858 (FSKFVGNVVGYLAFIFLYAYV). At 859-877 (VLFNFPRFDPAKTLGGIHP) the chain is on the extracellular side. The helical transmembrane segment at 878–898 (TEIVLYFWVFTILIEEIRQLA) threads the bilayer. Residues Glu893 and Gln896 each contribute to the Ca(2+) site. The Cytoplasmic portion of the chain corresponds to 899 to 916 (AKPPKYIKDKVSVYFSDT). Residues 917-937 (WNFVDIFSLTVFIIAIILRFF) traverse the membrane as a helical segment. Ca(2+) is bound by residues Asn918 and Asp921. Over 938 to 947 (TNSRIFTASR) the chain is Extracellular. The helical transmembrane segment at 948–968 (IILSLDIIFFIVRSLQIFSVN) threads the bilayer. Topologically, residues 969-980 (RLLGPKLVMIQK) are cytoplasmic. The helical transmembrane segment at 981-1001 (MMQDLAQFIIILAVFTIAYGI) threads the bilayer. The Extracellular segment spans residues 1002–1018 (ALHAVMFPSPGIYARNN). A glycan (N-linked (GlcNAc...) asparagine) is linked at Asn1017. Positions 1019–1034 (TWVTITSVVQYPYWQM) form an intramembrane region, pore-forming. The short motif at 1035–1037 (YGE) is the Selectivity filter element. Over 1035 to 1059 (YGELFLDEIQGEKPKEFGEVDPDGR) the chain is Extracellular. The short motif at 1040–1042 (LDE) is the Prevents fast channel inactivation element. A helical membrane pass occupies residues 1060–1080 (WLSPLLLAIYMVFTNILLLNL). At 1081 to 1116 (LIAIFNYTFERVQEDSDKVWKFQRYDLVQEYHSRPV) the chain is on the cytoplasmic side. An intramembrane segment occupies 1117 to 1135 (FAPPLVLLGHILIFIRWVW). Over 1136-1551 (RMCRCGHPPR…KVAKMRDAAF (416 aa)) the chain is Cytoplasmic. Residues 1184–1209 (LEERVRALGDRVDCINSQLNRVLDSM) adopt a coiled-coil conformation. In terms of domain architecture, Nudix hydrolase spans 1394–1546 (WKRTSAGVML…VSILEKVAKM (153 aa)). The short motif at 1428-1449 (GMVEPGQLVTQALKAEFGEEAM) is the Nudix box element.

This sequence belongs to the transient receptor (TC 1.A.4) family. LTrpC subfamily. TRPM2 sub-subfamily. In terms of assembly, homotetramer.

It localises to the cell membrane. With respect to regulation, activated by phosphatidylinositol 4,5-bisphosphate (PIP2). Although PIP2 is essential for the channel activation, its contribution to the level of channel activity is minimal. Also activated by diphosphate ribose-2'-phosphate. Upon binding to ADPR, channel activation requires only a short initial cytosolic Ca(2+) increase, then the activation is sustained by the uptake of extracellular Ca(2+). Activated by 2-aminoethyl diphenylborinate (2-APB) in a Ca(2+)-dependent manner. 2-APB prevents the inactivation of the channel. Functionally, nonselective, voltage-independent cation channel that mediates Ca(2+) and to a lesser extent Na(+) influx, leading to increased cytoplasmic Ca(2+) levels. Functions as a ligand-gated ion channel. Binding of ADP-ribose causes a conformation change; the channel is primed but still requires Ca(2+) binding to trigger channel opening. May have ADP-ribose pyrophosphatase activity which reduces ADP-ribose levels induced by oxidative stress, thus preventing the channel activation by reactive oxygen species. The protein is Transient receptor potential cation channel subfamily M member-like 2 of Nematostella vectensis (Starlet sea anemone).